Consider the following 77-residue polypeptide: Conotoxin Ar5.1 b (77 aa).

The first 19 residues, 1–19, serve as a signal peptide directing secretion; sequence MLCLPVFIILLLLASPAAS. The propeptide occupies 20–44; sequence NPLKTRIQSDLIRAALEDADMKNEK.

Belongs to the conotoxin T superfamily. Post-translationally, contains 2 disulfide bonds that can be either 'C1-C3, C2-C4' or 'C1-C4, C2-C3', since these disulfide connectivities have been observed for conotoxins with cysteine framework V (for examples, see AC P0DQQ7 and AC P81755). Expressed by the venom duct.

The protein localises to the secreted. The chain is Conotoxin Ar5.1 b from Conus arenatus (Sand-dusted cone).